A 364-amino-acid chain; its full sequence is Aminomethyltransferase (364 aa).

Belongs to the GcvT family. The glycine cleavage system is composed of four proteins: P, T, L and H.

It catalyses the reaction N(6)-[(R)-S(8)-aminomethyldihydrolipoyl]-L-lysyl-[protein] + (6S)-5,6,7,8-tetrahydrofolate = N(6)-[(R)-dihydrolipoyl]-L-lysyl-[protein] + (6R)-5,10-methylene-5,6,7,8-tetrahydrofolate + NH4(+). Functionally, the glycine cleavage system catalyzes the degradation of glycine. The polypeptide is Aminomethyltransferase (Shewanella loihica (strain ATCC BAA-1088 / PV-4)).